Reading from the N-terminus, the 172-residue chain is Trypsin inhibitor DE-3 (172 aa).

2 cysteine pairs are disulfide-bonded: cysteine 39–cysteine 83 and cysteine 132–cysteine 139.

The protein belongs to the protease inhibitor I3 (leguminous Kunitz-type inhibitor) family.

In terms of biological role, inhibition of trypsin. This chain is Trypsin inhibitor DE-3, found in Erythrina variegata (Indian coral tree).